Reading from the N-terminus, the 288-residue chain is Acidic endochitinase SP2 (288 aa).

Positions M1–A27 are cleaved as a signal peptide. Pyrrolidone carboxylic acid is present on Q28. The 36-residue stretch at Q28–G63 folds into the Chitin-binding type-1 domain. Cystine bridges form between C30-C38, C32-C44, C37-C51, and C56-C61. Residues G64 to P78 are compositionally biased toward low complexity. A disordered region spans residues G64–G84. The segment at G64 to S85 is hinge region (Gly/Pro/Thr-rich). A 4-hydroxyproline mark is found at P66, P69, P72, and P75. Tandem repeats lie at residues T67–P69, T70–P72, T73–P75, and T76–P78. A 4 X 3 AA tandem repeats of T-T-P region spans residues T67–P78. A catalytic region spans residues S86–C288. 3 disulfide bridges follow: C107-C154, C168-C178, and C256-C288. The active-site Proton donor is the E149.

This sequence belongs to the glycosyl hydrolase 19 family. Chitinase class I subfamily. O-glycosylated on hydroxyprolines; contains xylose. Localized to infected area.

The protein resides in the secreted. It localises to the extracellular space. It catalyses the reaction Random endo-hydrolysis of N-acetyl-beta-D-glucosaminide (1-&gt;4)-beta-linkages in chitin and chitodextrins.. In terms of biological role, defense against chitin-containing fungal pathogens. This Beta vulgaris (Sugar beet) protein is Acidic endochitinase SP2 (SP2).